The sequence spans 142 residues: Large ribosomal subunit protein uL11 (142 aa).

The protein belongs to the universal ribosomal protein uL11 family. As to quaternary structure, part of the ribosomal stalk of the 50S ribosomal subunit. Interacts with L10 and the large rRNA to form the base of the stalk. L10 forms an elongated spine to which L12 dimers bind in a sequential fashion forming a multimeric L10(L12)X complex. One or more lysine residues are methylated.

Functionally, forms part of the ribosomal stalk which helps the ribosome interact with GTP-bound translation factors. The protein is Large ribosomal subunit protein uL11 of Shewanella piezotolerans (strain WP3 / JCM 13877).